Reading from the N-terminus, the 353-residue chain is Uroporphyrinogen decarboxylase (353 aa).

Substrate is bound by residues 26-30 (RQAGR), aspartate 76, tyrosine 153, threonine 208, and histidine 326.

This sequence belongs to the uroporphyrinogen decarboxylase family. Homodimer.

Its subcellular location is the cytoplasm. The catalysed reaction is uroporphyrinogen III + 4 H(+) = coproporphyrinogen III + 4 CO2. It functions in the pathway porphyrin-containing compound metabolism; protoporphyrin-IX biosynthesis; coproporphyrinogen-III from 5-aminolevulinate: step 4/4. In terms of biological role, catalyzes the decarboxylation of four acetate groups of uroporphyrinogen-III to yield coproporphyrinogen-III. The polypeptide is Uroporphyrinogen decarboxylase (Chromohalobacter salexigens (strain ATCC BAA-138 / DSM 3043 / CIP 106854 / NCIMB 13768 / 1H11)).